The sequence spans 449 residues: Glucose-6-phosphate isomerase (449 aa).

Glu291 functions as the Proton donor in the catalytic mechanism. Catalysis depends on residues His312 and Lys426.

Belongs to the GPI family.

It is found in the cytoplasm. The enzyme catalyses alpha-D-glucose 6-phosphate = beta-D-fructose 6-phosphate. Its pathway is carbohydrate biosynthesis; gluconeogenesis. The protein operates within carbohydrate degradation; glycolysis; D-glyceraldehyde 3-phosphate and glycerone phosphate from D-glucose: step 2/4. In terms of biological role, catalyzes the reversible isomerization of glucose-6-phosphate to fructose-6-phosphate. In Streptococcus pneumoniae (strain ATCC BAA-255 / R6), this protein is Glucose-6-phosphate isomerase.